The sequence spans 801 residues: Putative mRNA-capping enzyme P5 (801 aa).

This sequence belongs to the phytoreovirus protein P5 family.

It localises to the virion. The protein resides in the host cytoplasm. The catalysed reaction is a 5'-end diphospho-ribonucleoside in mRNA + GTP + H(+) = a 5'-end (5'-triphosphoguanosine)-ribonucleoside in mRNA + diphosphate. Its pathway is mRNA processing; mRNA capping. In terms of biological role, enzyme involved in mRNA capping (Potential). Binds to GTP and might have guanylyltransferase activity. Together with the RNA-directed RNA polymerase P1 and protein P7, forms an transcriptional complex positioned near the channels situated at each of the five-fold vertices of the core. The polypeptide is Putative mRNA-capping enzyme P5 (Alopecurus aequalis (Barnyard grass)).